The following is a 795-amino-acid chain: Phenylalanine--tRNA ligase beta subunit (795 aa).

The tRNA-binding domain occupies 39–148; it reads AGVFDGVKVG…ENAPIGMDFR (110 aa). One can recognise a B5 domain in the interval 401–476; that stretch reads PKPNQVALRR…RIYGYNNIPN (76 aa). Mg(2+)-binding residues include Asp-454, Asp-460, Glu-463, and Glu-464. Residues 701-794 enclose the FDX-ACB domain; sequence SKFPANRRDI…VSAQFGAALR (94 aa).

The protein belongs to the phenylalanyl-tRNA synthetase beta subunit family. Type 1 subfamily. In terms of assembly, tetramer of two alpha and two beta subunits. The cofactor is Mg(2+).

The protein resides in the cytoplasm. It catalyses the reaction tRNA(Phe) + L-phenylalanine + ATP = L-phenylalanyl-tRNA(Phe) + AMP + diphosphate + H(+). This Vibrio cholerae serotype O1 (strain ATCC 39315 / El Tor Inaba N16961) protein is Phenylalanine--tRNA ligase beta subunit (pheT).